We begin with the raw amino-acid sequence, 1520 residues long: Putative lipoprotein AcfD homolog (1520 aa).

Positions 1 to 23 are cleaved as a signal peptide; that stretch reads MNKKFKYKKSLLAAILSATLLAG. 2 disordered regions span residues 22 to 107 and 226 to 247; these read AGCD…GATC and NAAT…TTPG. Residue cysteine 24 is the site of N-palmitoyl cysteine attachment. Residue cysteine 24 is the site of S-diacylglycerol cysteine attachment. The segment covering 31–42 has biased composition (low complexity); sequence SSSDTPPVDSGT. Residues 51-77 are compositionally biased toward pro residues; that stretch reads DPTPNPEPTPEPTPDPEPTPEPIPDPE. Over residues 97 to 107 the composition is skewed to polar residues; the sequence is GGSQRVTGATC. The span at 234-247 shows a compositional bias: low complexity; it reads STHTSPVVPVTTPG. A Peptidase M60 domain is found at 1081–1381; sequence GNMQSTGLWA…MYAQLKEWAE (301 aa). Positions 1498-1520 are disordered; that stretch reads DLPKPEQGPETINQVTEHKMSAE.

It to V.cholerae AcfD (VC_0845).

The protein localises to the cell inner membrane. Functionally, involved in a type II secretion system (T2SS, formerly general secretion pathway, GSP) for the export of folded proteins across the outer membrane. The protein is Putative lipoprotein AcfD homolog (yghJ) of Escherichia coli (strain K12).